The chain runs to 293 residues: 33 kDa chaperonin (293 aa).

Intrachain disulfides connect Cys-238–Cys-240 and Cys-271–Cys-274.

Belongs to the HSP33 family. Under oxidizing conditions two disulfide bonds are formed involving the reactive cysteines. Under reducing conditions zinc is bound to the reactive cysteines and the protein is inactive.

It is found in the cytoplasm. Functionally, redox regulated molecular chaperone. Protects both thermally unfolding and oxidatively damaged proteins from irreversible aggregation. Plays an important role in the bacterial defense system toward oxidative stress. In Staphylococcus aureus (strain Mu3 / ATCC 700698), this protein is 33 kDa chaperonin.